The sequence spans 240 residues: Lipoprotein signal peptidase (240 aa).

4 helical membrane-spanning segments follow: residues 38-58, 73-93, 98-118, and 120-140; these read LIWK…TSFL, LIPG…FGTL, PSLV…VLLF, and SNYL…SNII. Active-site residues include Asp162 and Asp179. The chain crosses the membrane as a helical span at residues 177-197; the sequence is FPDTFVIIGMIFVGIQIIISF.

This sequence belongs to the peptidase A8 family.

It is found in the cell membrane. The catalysed reaction is Release of signal peptides from bacterial membrane prolipoproteins. Hydrolyzes -Xaa-Yaa-Zaa-|-(S,diacylglyceryl)Cys-, in which Xaa is hydrophobic (preferably Leu), and Yaa (Ala or Ser) and Zaa (Gly or Ala) have small, neutral side chains.. It participates in protein modification; lipoprotein biosynthesis (signal peptide cleavage). Functionally, this protein specifically catalyzes the removal of signal peptides from prolipoproteins. This chain is Lipoprotein signal peptidase, found in Malacoplasma penetrans (strain HF-2) (Mycoplasma penetrans).